Reading from the N-terminus, the 144-residue chain is Cytochrome c oxidase subunit 4 isoform 1, mitochondrial (144 aa).

At 1–73 (SVVKSEDFSL…SFAEMNRGSN (73 aa)) the chain is on the mitochondrial matrix side. K4 carries the post-translational modification N6-acetyllysine; alternate. K4 is modified (N6-succinyllysine; alternate). K28 is subject to N6-acetyllysine. Residues S31 and S33 each carry the phosphoserine modification. N6-acetyllysine; alternate is present on K35. N6-succinyllysine; alternate is present on K35. N6-acetyllysine is present on K42. Residues 74 to 99 (EWKTVVGGAMFFIGFTALVIMWQKHY) traverse the membrane as a helical segment. The Mitochondrial intermembrane portion of the chain corresponds to 100-144 (VYGPLPQSFDKEWVAKQTKRMLDMKVNPIQGLASKWDYEKNEWKK).

This sequence belongs to the cytochrome c oxidase IV family. As to quaternary structure, component of the cytochrome c oxidase (complex IV, CIV), a multisubunit enzyme composed of 14 subunits. The complex is composed of a catalytic core of 3 subunits MT-CO1, MT-CO2 and MT-CO3, encoded in the mitochondrial DNA, and 11 supernumerary subunits COX4I, COX5A, COX5B, COX6A, COX6B, COX6C, COX7A, COX7B, COX7C, COX8 and NDUFA4, which are encoded in the nuclear genome. The complex exists as a monomer or a dimer and forms supercomplexes (SCs) in the inner mitochondrial membrane with NADH-ubiquinone oxidoreductase (complex I, CI) and ubiquinol-cytochrome c oxidoreductase (cytochrome b-c1 complex, complex III, CIII), resulting in different assemblies (supercomplex SCI(1)III(2)IV(1) and megacomplex MCI(2)III(2)IV(2)). Interacts with PHB2; the interaction decreases in absence of SPHK2. Interacts with AFG1L. Interacts with ABCB7; this interaction allows the regulation of cellular iron homeostasis and cellular reactive oxygen species (ROS) levels in cardiomyocytes. Interacts with FLVCR2; this interaction occurs in the absence of heme and is disrupted upon heme binding. Interacts with IRGC.

It localises to the mitochondrion inner membrane. It functions in the pathway energy metabolism; oxidative phosphorylation. Functionally, component of the cytochrome c oxidase, the last enzyme in the mitochondrial electron transport chain which drives oxidative phosphorylation. The respiratory chain contains 3 multisubunit complexes succinate dehydrogenase (complex II, CII), ubiquinol-cytochrome c oxidoreductase (cytochrome b-c1 complex, complex III, CIII) and cytochrome c oxidase (complex IV, CIV), that cooperate to transfer electrons derived from NADH and succinate to molecular oxygen, creating an electrochemical gradient over the inner membrane that drives transmembrane transport and the ATP synthase. Cytochrome c oxidase is the component of the respiratory chain that catalyzes the reduction of oxygen to water. Electrons originating from reduced cytochrome c in the intermembrane space (IMS) are transferred via the dinuclear copper A center (CU(A)) of subunit 2 and heme A of subunit 1 to the active site in subunit 1, a binuclear center (BNC) formed by heme A3 and copper B (CU(B)). The BNC reduces molecular oxygen to 2 water molecules using 4 electrons from cytochrome c in the IMS and 4 protons from the mitochondrial matrix. The protein is Cytochrome c oxidase subunit 4 isoform 1, mitochondrial (COX4I1) of Gorilla gorilla gorilla (Western lowland gorilla).